A 316-amino-acid chain; its full sequence is MTRIVFMGTPDFSVPVLGTLIDDGYEVVGVVTQPDRPKGRKKVMTPPPVKEEALRRGIPVLQPEKVREEAETDKILALEPDLIVTAAFGQILPKKLLDYPKYGCINVHASLLPELRGGAPIHYAILEGKEKTGVTIMYMVEKLDAGDMLAKVEVDIEETDNVGTLHDKLSKAGAALLSETVPRIIDGSVTPEKQDEQKATYAPNIKREQELIDWSKPGEVLYNQVRGLNPWPVAYTVLNGQTLKVWAAKKCQALKQAEPGEIVTVEKDGIVVATGNDTALKLTEVQPAGKKRMKAEDFVRGAGLQAGMKLGHDDEK.

Position 110–113 (110–113) interacts with (6S)-5,6,7,8-tetrahydrofolate; the sequence is SLLP.

This sequence belongs to the Fmt family.

It carries out the reaction L-methionyl-tRNA(fMet) + (6R)-10-formyltetrahydrofolate = N-formyl-L-methionyl-tRNA(fMet) + (6S)-5,6,7,8-tetrahydrofolate + H(+). In terms of biological role, attaches a formyl group to the free amino group of methionyl-tRNA(fMet). The formyl group appears to play a dual role in the initiator identity of N-formylmethionyl-tRNA by promoting its recognition by IF2 and preventing the misappropriation of this tRNA by the elongation apparatus. This Bacillus licheniformis (strain ATCC 14580 / DSM 13 / JCM 2505 / CCUG 7422 / NBRC 12200 / NCIMB 9375 / NCTC 10341 / NRRL NRS-1264 / Gibson 46) protein is Methionyl-tRNA formyltransferase.